A 395-amino-acid chain; its full sequence is Chalcone synthase 3 (395 aa).

V2 bears the N-acetylvaline mark. C169 is an active-site residue.

It belongs to the thiolase-like superfamily. Chalcone/stilbene synthases family.

It catalyses the reaction (E)-4-coumaroyl-CoA + 3 malonyl-CoA + 3 H(+) = 2',4,4',6'-tetrahydroxychalcone + 3 CO2 + 4 CoA. It functions in the pathway secondary metabolite biosynthesis; flavonoid biosynthesis. In terms of biological role, the primary product of this enzyme is 4,2',4',6'-tetrahydroxychalcone (also termed naringenin-chalcone or chalcone) which can under specific conditions spontaneously isomerize into naringenin. The sequence is that of Chalcone synthase 3 (CHS3) from Sinapis alba (White mustard).